A 496-amino-acid chain; its full sequence is Fizzy-related protein homolog (496 aa).

Disordered regions lie at residues 28-51, 64-88, and 105-166; these read RRTLTPASSPVSSPSKHGDRFIPS, INENEKSPSQNRKAKDATSDNGKDG, and EKVQ…SPRK. Residue threonine 32 is modified to Phosphothreonine. Positions 32–42 are enriched in polar residues; sequence TPASSPVSSPS. A Phosphoserine modification is found at serine 36. An involved in APC/FZR1 E3 ubiquitin-protein ligase complex activity region spans residues 47–52; the sequence is RFIPSR. Lysine 69 carries the post-translational modification N6-acetyllysine. Basic and acidic residues-rich tracts occupy residues 76–86 and 106–126; these read KAKDATSDNGK and KVQDPQTEDRRLQPSTPEKKG. Serine 133, serine 138, serine 146, and serine 151 each carry phosphoserine. Polar residues predominate over residues 146–160; the sequence is SPYSLSPVSNKSQKL. Lysine 159 carries the post-translational modification N6-acetyllysine. WD repeat units follow at residues 182–222, 227–266, 269–306, 311–350, 353–395, 397–438, and 441–480; these read PELQ…VTRL, VEGDSVTSVGWSERGNLVAVGTHKGFVQIWDAAAGKKLSM, GHTARVGALAWNAEQLSSGSRDRMILQRDIRTPPLQSE, GHRQEVCGLKWSTDHQLLASGGNDNKLLVWNHSSLSPVQQ, EHLA…PLQC, DTGS…QVAK, and GHSYRVLYLAMSPDGEAIVTGAGDETLRFWNVFSKTRSTK.

It belongs to the WD repeat CDC20/Fizzy family. In terms of assembly, the unphosphorylated form interacts with APC/C during mitosis. Interacts with NINL. Interacts (in complex with the anaphase promoting complex APC) with MAD2L2; inhibits FZR1-mediated APC/C activation. Interacts with SIRT2 and USP37. Interacts (via WD repeats) with MAK. Interacts with RBBP8/CtIP; this interaction leads to RBBP8 proteasomal degradation. Interacts with HECW2. Interacts with SASS6; the interaction is regulated by CENATAC and leads to SASS6 proteasomal degradation. Interacts (via N-terminus) with CCNF. Interacts with CDC6. Interacts with TK1 (via the KEN box). Acetylated. Deacetylated by SIRT2 at Lys-69 and Lys-159; deacetylation enhances the interaction of FZR1 with CDC27, leading to activation of anaphase promoting complex/cyclosome (APC/C). Post-translationally, following DNA damage, it is dephosphorylated by CDC14B in G2 phase, leading to its reassociation with the APC/C, and allowing an efficient G2 DNA damage checkpoint. Phosphorylated by MAK. In terms of processing, ubiquitinated by the SCF(CCNF) E3 ubiquitin-protein ligase complex; leading to its degradation by the proteasome. Isoform 2 is expressed at high levels in heart, liver, spleen and some cancer cell lines whereas isoform 3 is expressed only at low levels in these tissues.

It is found in the nucleus. Its subcellular location is the cytoplasm. The protein operates within protein modification; protein ubiquitination. Its function is as follows. Substrate-specific adapter for the anaphase promoting complex/cyclosome (APC/C) E3 ubiquitin-protein ligase complex. Associates with the APC/C in late mitosis, in replacement of CDC20, and activates the APC/C during anaphase and telophase. The APC/C remains active in degrading substrates to ensure that positive regulators of the cell cycle do not accumulate prematurely. At the G1/S transition FZR1 is phosphorylated, leading to its dissociation from the APC/C. Following DNA damage, it is required for the G2 DNA damage checkpoint: its dephosphorylation and reassociation with the APC/C leads to the ubiquitination of PLK1, preventing entry into mitosis. Acts as an adapter for APC/C to target the DNA-end resection factor RBBP8/CtIP for ubiquitination and subsequent proteasomal degradation. Through the regulation of RBBP8/CtIP protein turnover, may play a role in DNA damage response, favoring DNA double-strand repair through error-prone non-homologous end joining (NHEJ) over error-free, RBBP8-mediated homologous recombination (HR). This Homo sapiens (Human) protein is Fizzy-related protein homolog.